Consider the following 394-residue polypeptide: Na(+)/H(+) antiporter NhaA (394 aa).

A run of 11 helical transmembrane segments spans residues 11-31 (LEAASGILLLVSALLAMIFAN), 59-79 (LLMWVNDGFMAVFFILVGMEV), 95-115 (IFPAVAALGGMIIPALVYWFI), 125-145 (GWAIPMATDIAFALGIVALLS), 155-175 (FLLALAIIDDLGAIIVIALFF), 177-197 (HEMSMQALTIASIAIVILVAM), 203-220 (TGLINYAIIGTILWASVL), 254-274 (ALAPWCSFAILPLFAFSNAGV), 296-316 (LIIGKPVGVFLFSYVAVLLGI), 328-348 (IFAIAVLCGIGFTMSMFIAGL), and 365-385 (LGILMGTFVAAIIGYFLLKIT).

Belongs to the NhaA Na(+)/H(+) (TC 2.A.33) antiporter family.

Its subcellular location is the cell inner membrane. It catalyses the reaction Na(+)(in) + 2 H(+)(out) = Na(+)(out) + 2 H(+)(in). In terms of biological role, na(+)/H(+) antiporter that extrudes sodium in exchange for external protons. The polypeptide is Na(+)/H(+) antiporter NhaA (Actinobacillus pleuropneumoniae serotype 3 (strain JL03)).